The primary structure comprises 472 residues: Glycosyl hydrolase family 109 protein (472 aa).

Residues 1–35 constitute a signal peptide (tat-type signal); the sequence is MSQTPAVSRRLLLGSAAATGALATGIGSAAPVAAA. NAD(+) contacts are provided by residues 68–69, D90, 139–142, H145, 159–160, and N188; these read NR, WEFH, and EL. Substrate is bound by residues Y217, R236, 248 to 251, and Y330; that span reads YPMH. An NAD(+)-binding site is contributed by Y248.

This sequence belongs to the Gfo/Idh/MocA family. Glycosyl hydrolase 109 subfamily. The cofactor is NAD(+). Predicted to be exported by the Tat system. The position of the signal peptide cleavage has not been experimentally proven.

Glycosidase. Has no alpha-N-acetylgalactosaminidase activity. The chain is Glycosyl hydrolase family 109 protein from Streptomyces coelicolor (strain ATCC BAA-471 / A3(2) / M145).